A 99-amino-acid chain; its full sequence is PE family immunomodulator PE35 (99 aa).

The region spanning 1–90 (MEKMSHDPIA…DVARTYSQID (90 aa)) is the PE domain.

Belongs to the mycobacterial PE family. In terms of assembly, interacts with PPE68. PE35/PPE68 complex interacts with human TLR2.

Its subcellular location is the secreted. The protein resides in the cell surface. Its function is as follows. Plays a major role in RD1-associated pathogenesis, and may contribute to the establishment and maintenance of M.tuberculosis infection. Together with PPE68, stimulates the secretion of IL-10 and MCP-1 from human macrophages, via the interaction with human Toll-like receptor 2 (TLR2). The chain is PE family immunomodulator PE35 (PE35) from Mycobacterium tuberculosis (strain ATCC 25618 / H37Rv).